Reading from the N-terminus, the 820-residue chain is Serine/threonine-protein phosphatase 4 regulatory subunit 3-B (820 aa).

Residues methionine 1 to valine 100 form the WH1 domain. Acidic residues predominate over residues glutamate 682 to glutamate 694. Disordered stretches follow at residues glutamate 682–glutamate 711 and alanine 750–serine 820. The span at glutamate 701 to glutamate 711 shows a compositional bias: basic and acidic residues. Polar residues-rich tracts occupy residues alanine 750 to serine 761 and proline 768 to glycine 790. Positions tyrosine 798–aspartate 809 are enriched in acidic residues.

Belongs to the SMEK family. As to quaternary structure, serine/threonine-protein phosphatase 4 (PP4) occurs in different assemblies of the catalytic and one or more regulatory subunits.

Regulatory subunit of serine/threonine-protein phosphatase 4 (PP4). The sequence is that of Serine/threonine-protein phosphatase 4 regulatory subunit 3-B from Xenopus laevis (African clawed frog).